The following is a 296-amino-acid chain: MTKEKIIVIVGPTAVGKTALGIALAGAFNGEIISGDSQQVYRHLDIGTAKASAREQALAVHHLIDIREVTESYSAFDFVQDAKRAIEDIVSRGKLPIIVGGTGLYLQSLLEGYHLGGDLDQKELLAYRQQLETLTDTELYQLLASKGIHLDQVNRRRAIRSLELNQFARDLKNQEAPYNPLMIGLTDEREVIYERINKRVDLMMASGLLEEARWLFEQYPAVQASRGIGYKELFPYFQGQASLEEATATLKQQTRRFAKRQLTWFRNRMAVRFDSISESSYPQAIYDRVERFLKEP.

11-18 serves as a coordination point for ATP; that stretch reads GPTAVGKT. Substrate is bound at residue 13-18; that stretch reads TAVGKT. Residues 36-39 form an interaction with substrate tRNA region; that stretch reads DSQQ.

The protein belongs to the IPP transferase family. Monomer. The cofactor is Mg(2+).

The enzyme catalyses adenosine(37) in tRNA + dimethylallyl diphosphate = N(6)-dimethylallyladenosine(37) in tRNA + diphosphate. Functionally, catalyzes the transfer of a dimethylallyl group onto the adenine at position 37 in tRNAs that read codons beginning with uridine, leading to the formation of N6-(dimethylallyl)adenosine (i(6)A). The sequence is that of tRNA dimethylallyltransferase from Streptococcus equi subsp. zooepidemicus (strain H70).